Reading from the N-terminus, the 270-residue chain is Formamidopyrimidine-DNA glycosylase (270 aa).

The active-site Schiff-base intermediate with DNA is P2. The Proton donor role is filled by E3. Residue K58 is the Proton donor; for beta-elimination activity of the active site. DNA contacts are provided by H91, R110, and R151. The FPG-type zinc-finger motif lies at 236–270 (FVYGRGGEFCKSCGSTLREIRLGQRASVYCSRCQR). The Proton donor; for delta-elimination activity role is filled by R260.

Belongs to the FPG family. Monomer. The cofactor is Zn(2+).

The enzyme catalyses Hydrolysis of DNA containing ring-opened 7-methylguanine residues, releasing 2,6-diamino-4-hydroxy-5-(N-methyl)formamidopyrimidine.. It carries out the reaction 2'-deoxyribonucleotide-(2'-deoxyribose 5'-phosphate)-2'-deoxyribonucleotide-DNA = a 3'-end 2'-deoxyribonucleotide-(2,3-dehydro-2,3-deoxyribose 5'-phosphate)-DNA + a 5'-end 5'-phospho-2'-deoxyribonucleoside-DNA + H(+). In terms of biological role, involved in base excision repair of DNA damaged by oxidation or by mutagenic agents. Acts as a DNA glycosylase that recognizes and removes damaged bases. Has a preference for oxidized purines, such as 7,8-dihydro-8-oxoguanine (8-oxoG). Has AP (apurinic/apyrimidinic) lyase activity and introduces nicks in the DNA strand. Cleaves the DNA backbone by beta-delta elimination to generate a single-strand break at the site of the removed base with both 3'- and 5'-phosphates. This Stutzerimonas stutzeri (strain A1501) (Pseudomonas stutzeri) protein is Formamidopyrimidine-DNA glycosylase.